Consider the following 564-residue polypeptide: Dihydroxy-acid dehydratase (564 aa).

Residue Cys51 coordinates [2Fe-2S] cluster. Position 83 (Asp83) interacts with Mg(2+). Cys124 provides a ligand contact to [2Fe-2S] cluster. The Mg(2+) site is built by Asp125 and Lys126. Position 126 is an N6-carboxylysine (Lys126). Cys196 serves as a coordination point for [2Fe-2S] cluster. Glu448 is a binding site for Mg(2+). Ser474 (proton acceptor) is an active-site residue.

This sequence belongs to the IlvD/Edd family. In terms of assembly, homodimer. It depends on [2Fe-2S] cluster as a cofactor. Mg(2+) serves as cofactor.

It carries out the reaction (2R)-2,3-dihydroxy-3-methylbutanoate = 3-methyl-2-oxobutanoate + H2O. It catalyses the reaction (2R,3R)-2,3-dihydroxy-3-methylpentanoate = (S)-3-methyl-2-oxopentanoate + H2O. It participates in amino-acid biosynthesis; L-isoleucine biosynthesis; L-isoleucine from 2-oxobutanoate: step 3/4. It functions in the pathway amino-acid biosynthesis; L-valine biosynthesis; L-valine from pyruvate: step 3/4. Functionally, functions in the biosynthesis of branched-chain amino acids. Catalyzes the dehydration of (2R,3R)-2,3-dihydroxy-3-methylpentanoate (2,3-dihydroxy-3-methylvalerate) into 2-oxo-3-methylpentanoate (2-oxo-3-methylvalerate) and of (2R)-2,3-dihydroxy-3-methylbutanoate (2,3-dihydroxyisovalerate) into 2-oxo-3-methylbutanoate (2-oxoisovalerate), the penultimate precursor to L-isoleucine and L-valine, respectively. The protein is Dihydroxy-acid dehydratase of Pyrobaculum calidifontis (strain DSM 21063 / JCM 11548 / VA1).